The chain runs to 568 residues: MQGLIELGLRRLVLCPGSRSGSLATAAGLLASSGQLQLNTAIDERSAAFLALGLATAGGSAVAVVTTSGTAVANLLPAVIEADRSCQPLLVITADRPIRLKACGANQTVNQEDFLRPACRWCGNGAPEGLHAMASHAVLELAALAWSQAHGADQAAAGPVHLNLPVEEPIHAPLQEHQPLLDAVLASDEASLFPLQPSTIQSNRDVPRLDPSRPGVVIAGPWRGLAQDLSAHQQAVRSWLVCSGWPLLADPLSALPVELPGRLHHWDLQLEQLISPEPLQVLRLGPLPASRRLEVWLKRNAGDQVLITEGEPRYMDPLGLATQWSGGLAAWCCAQPLDQASRPLSADHSAWLRRDQALGLWLEEQLVSEGPVSEPALAFQLADLLPPGLPVMLSASSPVRDWLTWSGRSGSDRRCFSFRGASGIDGTLSLAMGLALETGPMLLVTGDLALLHDSNGWLHGQSDGPPLVVLLIDNGGGGIFQQLPIEQASPKRFDALFAMPQRVNPIALAAAHGVPGRSIAVIDDLPEALSWALAQQGPVLLRVCTDRHADAAFRRKLRSAAQNVEPGV.

The protein belongs to the TPP enzyme family. MenD subfamily. Homodimer. The cofactor is Mg(2+). Requires Mn(2+) as cofactor. It depends on thiamine diphosphate as a cofactor.

The catalysed reaction is isochorismate + 2-oxoglutarate + H(+) = 5-enolpyruvoyl-6-hydroxy-2-succinyl-cyclohex-3-ene-1-carboxylate + CO2. Its pathway is quinol/quinone metabolism; 1,4-dihydroxy-2-naphthoate biosynthesis; 1,4-dihydroxy-2-naphthoate from chorismate: step 2/7. The protein operates within cofactor biosynthesis; phylloquinone biosynthesis. Its function is as follows. Catalyzes the thiamine diphosphate-dependent decarboxylation of 2-oxoglutarate and the subsequent addition of the resulting succinic semialdehyde-thiamine pyrophosphate anion to isochorismate to yield 2-succinyl-5-enolpyruvyl-6-hydroxy-3-cyclohexene-1-carboxylate (SEPHCHC). The chain is 2-succinyl-5-enolpyruvyl-6-hydroxy-3-cyclohexene-1-carboxylate synthase from Synechococcus sp. (strain CC9902).